The following is a 259-amino-acid chain: 3-hydroxypropionyl-coenzyme A dehydratase (259 aa).

The Nucleophile role is filled by Glu113. The active-site Proton acceptor is Glu133.

Belongs to the enoyl-CoA hydratase/isomerase family. As to quaternary structure, monomer.

The catalysed reaction is 3-hydroxypropanoyl-CoA = acryloyl-CoA + H2O. Plays a role in autotrophic carbon fixation via the 3-hydroxypropionate/4-hydroxybutyrate cycle. Catalyzes the reversible dehydration of 3-hydroxypropionyl-CoA to form acryloyl-CoA, and the reversible dehydration of (S)-3-hydroxybutyryl-CoA to form crotonyl-CoA. Inactive towards (R)-3-hydroxybutyryl-CoA. This Metallosphaera sedula (strain ATCC 51363 / DSM 5348 / JCM 9185 / NBRC 15509 / TH2) protein is 3-hydroxypropionyl-coenzyme A dehydratase.